The sequence spans 321 residues: MVKGSQKIVAVDQDIPIIDMSQERSQVSMQIVKACESLGFFKVINHGVDQTTISRMEQESINFFAKPAHEKKSVRPVNQPFRYGFRDIGLNGDSGEVEYLLFHTNDPAFRSQLSFSSAVNCYIEAVKQLAREILDLTAEGLHVPPHSFSRLISSVDSDSVLRVNHYPPSDQFFGEANLSDQSVSLTRVGFGEHTDPQILTVLRSNGVGGLQVSNSDGMWVSVSPDPSAFCVNVGDLLQVMTNGRFISVRHRALTYGEESRLSTAYFAGPPLQAKIGPLSAMVMTMNQPRLYQTFTWGEYKKRAYSLRLEDSRLDMFRTCKD.

Residues 156–269 (DSDSVLRVNH…RLSTAYFAGP (114 aa)) enclose the Fe2OG dioxygenase domain. Fe cation is bound by residues His193, Asp195, and His250. Arg260 is an active-site residue.

This sequence belongs to the iron/ascorbate-dependent oxidoreductase family. GA2OX subfamily. The cofactor is Fe(2+). As to expression, expressed at the base of the shoot apical meristem and developing leaf primordia.

The catalysed reaction is gibberellin A1 + 2-oxoglutarate + O2 = gibberellin A8 + succinate + CO2. It functions in the pathway plant hormone biosynthesis; gibberellin biosynthesis. In terms of biological role, catalyzes the 2-beta-hydroxylation of several biologically active gibberellins, leading to the homeostatic regulation of their endogenous level. Catabolism of gibberellins (GAs) plays a central role in plant development. Converts GA9/GA20 to GA51/GA29 and GA4/GA1 to GA34/GA8. The sequence is that of Gibberellin 2-beta-dioxygenase 4 (GA2OX4) from Arabidopsis thaliana (Mouse-ear cress).